The chain runs to 116 residues: Iron-sulfur cluster insertion protein ErpA (116 aa).

Residues C44, C108, and C110 each coordinate iron-sulfur cluster.

The protein belongs to the HesB/IscA family. As to quaternary structure, homodimer. It depends on iron-sulfur cluster as a cofactor.

In terms of biological role, required for insertion of 4Fe-4S clusters for at least IspG. In Aeromonas hydrophila subsp. hydrophila (strain ATCC 7966 / DSM 30187 / BCRC 13018 / CCUG 14551 / JCM 1027 / KCTC 2358 / NCIMB 9240 / NCTC 8049), this protein is Iron-sulfur cluster insertion protein ErpA.